A 256-amino-acid polypeptide reads, in one-letter code: Imidazole glycerol phosphate synthase subunit HisF (256 aa).

Active-site residues include Asp12 and Asp131.

It belongs to the HisA/HisF family. In terms of assembly, heterodimer of HisH and HisF.

It is found in the cytoplasm. The enzyme catalyses 5-[(5-phospho-1-deoxy-D-ribulos-1-ylimino)methylamino]-1-(5-phospho-beta-D-ribosyl)imidazole-4-carboxamide + L-glutamine = D-erythro-1-(imidazol-4-yl)glycerol 3-phosphate + 5-amino-1-(5-phospho-beta-D-ribosyl)imidazole-4-carboxamide + L-glutamate + H(+). It functions in the pathway amino-acid biosynthesis; L-histidine biosynthesis; L-histidine from 5-phospho-alpha-D-ribose 1-diphosphate: step 5/9. Functionally, IGPS catalyzes the conversion of PRFAR and glutamine to IGP, AICAR and glutamate. The HisF subunit catalyzes the cyclization activity that produces IGP and AICAR from PRFAR using the ammonia provided by the HisH subunit. The sequence is that of Imidazole glycerol phosphate synthase subunit HisF from Stutzerimonas stutzeri (strain A1501) (Pseudomonas stutzeri).